We begin with the raw amino-acid sequence, 97 residues long: NADH-ubiquinone oxidoreductase chain 4L (97 aa).

3 consecutive transmembrane segments (helical) span residues 1–21, 28–48, and 57–77; these read MSMF…YVFC, LVVL…IVLF, and FFPV…LSIL.

It belongs to the complex I subunit 4L family.

The protein resides in the mitochondrion membrane. The enzyme catalyses a ubiquinone + NADH + 5 H(+)(in) = a ubiquinol + NAD(+) + 4 H(+)(out). Core subunit of the mitochondrial membrane respiratory chain NADH dehydrogenase (Complex I) that is believed to belong to the minimal assembly required for catalysis. Complex I functions in the transfer of electrons from NADH to the respiratory chain. The immediate electron acceptor for the enzyme is believed to be ubiquinone. This Locusta migratoria (Migratory locust) protein is NADH-ubiquinone oxidoreductase chain 4L (ND4L).